Reading from the N-terminus, the 942-residue chain is Protein O-mannosyl-transferase TMTC1 (942 aa).

The Cytoplasmic portion of the chain corresponds to 1 to 20 (MLVTRGDRGGGERAPSRRPR). A helical transmembrane segment spans residues 21-41 (CGLVPAGAAALLAGASCLCYG). Residues 42 to 109 (RSLRGEFVHD…RLNIFLTGMN (68 aa)) are Extracellular-facing. A helical membrane pass occupies residues 110–130 (PFYFHAVNVILHCLVTLVLMY). Residues 131-140 (TCDKTVFKNR) are Cytoplasmic-facing. Residues 141-157 (GLAFVTALLFAVHPVHT) traverse the membrane as a helical segment. Residues 158–159 (EA) lie on the Extracellular side of the membrane. Residues 160–180 (VAGIVGRADVLACLLFLLAFL) traverse the membrane as a helical segment. The Cytoplasmic portion of the chain corresponds to 181–196 (SYQRSLDQGCAGQCFP). The chain crosses the membrane as a helical span at residues 197–217 (TTASPFFLLLSLFLGTCAMLV). Residues 218–331 (KETGITVFGV…LLTLRPFLKR (114 aa)) are Extracellular-facing. The interval 245–285 (NGAVCQHSSGQPGSPQPSSQQAHPHRESRKQRFPHKDSWGG) is disordered. Over residues 250–266 (QHSSGQPGSPQPSSQQA) the composition is skewed to low complexity. The chain crosses the membrane as a helical span at residues 332-352 (AILVISYVTVILYFRLWIMGG). Residues 353-373 (TMPLFSEQDNPASFSPYILTR) lie on the Cytoplasmic side of the membrane. The helical transmembrane segment at 374-394 (FLTYSYLLAFNVWLLLAPITL) threads the bilayer. The Extracellular segment spans residues 395–414 (CYDWQVGSIPLVETIWDVRN). A helical transmembrane segment spans residues 415–435 (LATILLAVVMALLSLHCVAAF). Residues 436–441 (KRLEHK) lie on the Cytoplasmic side of the membrane. Residues 442-462 (EVLAGLLFLVFPFIPASNLFF) form a helical membrane-spanning segment. A topological domain (extracellular) is located at residue Arg-463. A helical transmembrane segment spans residues 464 to 484 (VGFVVAERVLYMPSMGYCILF). Topologically, residues 485–498 (VHGLSKLCAGLSRC) are cytoplasmic. The helical transmembrane segment at 499-519 (GATSLMASTVLLLLLFSWKTV) threads the bilayer. Topologically, residues 520-942 (KQNEIWLSRE…LQEVRERDQT (423 aa)) are extracellular. TPR repeat units follow at residues 543-576 (AKVHYNYANFLKDQGRNKEAIYHYRTALKLYPRH), 577-607 (ASALNNLGTLTKDMAEAKMYYQKALQLHPQH), 608-641 (NRALFNLGNLLKSQEKTEEAIMLLKESIKYGPDF), 642-675 (ADAYSSLASLLAEQERFKEAEDIYQAGIKNCPDS), 676-709 (SDLHNNYAVFLVDSGFPEKAVAHYQQAIQLSPSH), 710-742 (HVAVVNLGRLYRSLGENSKAEEWYRRALKVART), 743-776 (AEVLSPLGALYYNTGRHKEALEVYREAVSLQPSQ), 777-810 (RELRLALAQVLAVMGQTKEAEKITSHIVSEEPRC), 811-844 (LECYRLLSAIHSKQEHHGKALEAIEKALQLKPKD), 849-882 (SELFFTKGNQLREQNLLDKAFESYEAAVTLDPDQ), and 883-916 (AQAWMNMGGIRHIQGSYVSARAYYERALKLVPDS).

It belongs to the TMTC family. May interact with FAM168B.

It is found in the membrane. Its subcellular location is the endoplasmic reticulum. It catalyses the reaction a di-trans,poly-cis-dolichyl beta-D-mannosyl phosphate + L-seryl-[protein] = 3-O-(alpha-D-mannosyl)-L-seryl-[protein] + a di-trans,poly-cis-dolichyl phosphate + H(+). The enzyme catalyses a di-trans,poly-cis-dolichyl beta-D-mannosyl phosphate + L-threonyl-[protein] = 3-O-(alpha-D-mannosyl)-L-threonyl-[protein] + a di-trans,poly-cis-dolichyl phosphate + H(+). It participates in protein modification; protein glycosylation. Transfers mannosyl residues to the hydroxyl group of serine or threonine residues. The 4 members of the TMTC family are O-mannosyl-transferases dedicated primarily to the cadherin superfamily, each member seems to have a distinct role in decorating the cadherin domains with O-linked mannose glycans at specific regions. Also acts as O-mannosyl-transferase on other proteins such as PDIA3. The protein is Protein O-mannosyl-transferase TMTC1 of Mus musculus (Mouse).